We begin with the raw amino-acid sequence, 239 residues long: Fatty acid metabolism regulator protein (239 aa).

The HTH gntR-type domain maps to 6 to 74 (QSPAGFAEEY…HGKPTKVNNF (69 aa)). Positions 34–53 (ERELSELIGVTRTTLREVLQ) form a DNA-binding region, H-T-H motif.

In terms of assembly, homodimer.

Its subcellular location is the cytoplasm. Functionally, multifunctional regulator of fatty acid metabolism. This is Fatty acid metabolism regulator protein from Klebsiella pneumoniae (strain 342).